The chain runs to 697 residues: Elongation factor G (697 aa).

One can recognise a tr-type G domain in the interval 8-283 (EHIRNIGICA…AVVDFLPSPT (276 aa)). GTP contacts are provided by residues 17 to 24 (AHIDAGKT), 81 to 85 (DTPGH), and 135 to 138 (NKMD).

This sequence belongs to the TRAFAC class translation factor GTPase superfamily. Classic translation factor GTPase family. EF-G/EF-2 subfamily.

The protein resides in the cytoplasm. Its function is as follows. Catalyzes the GTP-dependent ribosomal translocation step during translation elongation. During this step, the ribosome changes from the pre-translocational (PRE) to the post-translocational (POST) state as the newly formed A-site-bound peptidyl-tRNA and P-site-bound deacylated tRNA move to the P and E sites, respectively. Catalyzes the coordinated movement of the two tRNA molecules, the mRNA and conformational changes in the ribosome. This is Elongation factor G from Rickettsia massiliae (strain Mtu5).